The sequence spans 127 residues: Large ribosomal subunit protein uL22 (127 aa).

It belongs to the universal ribosomal protein uL22 family. As to quaternary structure, part of the 50S ribosomal subunit.

Functionally, this protein binds specifically to 23S rRNA; its binding is stimulated by other ribosomal proteins, e.g. L4, L17, and L20. It is important during the early stages of 50S assembly. It makes multiple contacts with different domains of the 23S rRNA in the assembled 50S subunit and ribosome. The globular domain of the protein is located near the polypeptide exit tunnel on the outside of the subunit, while an extended beta-hairpin is found that lines the wall of the exit tunnel in the center of the 70S ribosome. The chain is Large ribosomal subunit protein uL22 from Rhizorhabdus wittichii (strain DSM 6014 / CCUG 31198 / JCM 15750 / NBRC 105917 / EY 4224 / RW1) (Sphingomonas wittichii).